Here is a 315-residue protein sequence, read N- to C-terminus: Porphobilinogen deaminase (315 aa).

Residue C234 is modified to S-(dipyrrolylmethanemethyl)cysteine.

Belongs to the HMBS family. Monomer. Dipyrromethane serves as cofactor.

It carries out the reaction 4 porphobilinogen + H2O = hydroxymethylbilane + 4 NH4(+). It functions in the pathway porphyrin-containing compound metabolism; protoporphyrin-IX biosynthesis; coproporphyrinogen-III from 5-aminolevulinate: step 2/4. Tetrapolymerization of the monopyrrole PBG into the hydroxymethylbilane pre-uroporphyrinogen in several discrete steps. In Mycolicibacterium paratuberculosis (strain ATCC BAA-968 / K-10) (Mycobacterium paratuberculosis), this protein is Porphobilinogen deaminase.